Here is a 394-residue protein sequence, read N- to C-terminus: 4-hydroxyphenylpyruvate dioxygenase (394 aa).

VOC domains lie at Gly-27–Arg-161 and His-193–Lys-351. Fe cation-binding residues include His-196, His-279, and Glu-362.

It belongs to the 4HPPD family. Fe cation serves as cofactor.

The catalysed reaction is 3-(4-hydroxyphenyl)pyruvate + O2 = homogentisate + CO2. The protein operates within amino-acid degradation; L-phenylalanine degradation; acetoacetate and fumarate from L-phenylalanine: step 3/6. In Yarrowia lipolytica (strain CLIB 122 / E 150) (Yeast), this protein is 4-hydroxyphenylpyruvate dioxygenase.